Consider the following 601-residue polypeptide: Lanthanide-dependent methanol dehydrogenase (601 aa).

Residues 1–21 form the signal peptide; that stretch reads MRAVHLLALGAGLAAASPALA. An intrachain disulfide couples Cys124 to Cys125. Arg130, Thr174, Ser189, Gly190, and Gly191 together coordinate pyrroloquinoline quinone. Glu192 provides a ligand contact to La(3+). Cys197 and Cys256 are disulfide-bonded. A pyrroloquinoline quinone-binding site is contributed by Trp258. Residues Asn276, Asp318, and Asp320 each coordinate La(3+). Asp318 acts as the Proton acceptor in catalysis. Arg345 contacts pyrroloquinoline quinone. An intrachain disulfide couples Cys408 to Cys437. Positions 494 and 558 each coordinate pyrroloquinoline quinone.

This sequence belongs to the bacterial PQQ dehydrogenase family. As to quaternary structure, homodimer. La(3+) serves as cofactor. It depends on Nd(3+) as a cofactor. The cofactor is pyrroloquinoline quinone.

It is found in the periplasm. The enzyme catalyses 2 Fe(III)-[cytochrome cL] + methanol = 2 Fe(II)-[cytochrome cL] + formaldehyde + 2 H(+). Its function is as follows. Catalyzes the oxidation of methanol to formaldehyde, but only in the presence of lanthanides (Ln). Contributes to methanol metabolism when La(3+) is present in the natural environment of the bacterium, allowing bacterial growth with methanol as carbon and energy source. Thereby is an essential enzyme for Ln-dependent methylotrophy. Uses a specific cytochrome cL (XoxG), encoded by the adjacent gene in the locus, as electron acceptor. Also plays a role in the transcriptional regulation of the mxa and xox1 operons, most likely acting as a lanthanide sensory module. Is also able to oxidize formaldehyde to formate in vitro, but this activity does not occur in vivo. The sequence is that of Lanthanide-dependent methanol dehydrogenase from Methylorubrum extorquens (strain ATCC 14718 / DSM 1338 / JCM 2805 / NCIMB 9133 / AM1) (Methylobacterium extorquens).